We begin with the raw amino-acid sequence, 532 residues long: Glutamate--cysteine ligase (532 aa).

This sequence belongs to the glutamate--cysteine ligase type 1 family. Type 1 subfamily.

It carries out the reaction L-cysteine + L-glutamate + ATP = gamma-L-glutamyl-L-cysteine + ADP + phosphate + H(+). It participates in sulfur metabolism; glutathione biosynthesis; glutathione from L-cysteine and L-glutamate: step 1/2. This chain is Glutamate--cysteine ligase, found in Pseudomonas fluorescens (strain Pf0-1).